The sequence spans 650 residues: Probable protein phosphatase 2C 36 (650 aa).

Positions 146–166 are disordered; it reads SGKKTKEKAKLKKSGSKSFTK. A compositionally biased stretch (basic residues) spans 148–166; sequence KKTKEKAKLKKSGSKSFTK. In terms of domain architecture, PPM-type phosphatase spans 239–641; it reads ESALEEPKIQ…DDVSVIVISL (403 aa). The Mn(2+) site is built by aspartate 276, glycine 277, aspartate 569, and aspartate 632.

It belongs to the PP2C family. The cofactor is Mg(2+). Mn(2+) serves as cofactor.

It is found in the nucleus. It catalyses the reaction O-phospho-L-seryl-[protein] + H2O = L-seryl-[protein] + phosphate. The enzyme catalyses O-phospho-L-threonyl-[protein] + H2O = L-threonyl-[protein] + phosphate. This is Probable protein phosphatase 2C 36 (PLL3) from Arabidopsis thaliana (Mouse-ear cress).